Here is a 273-residue protein sequence, read N- to C-terminus: 2,3,4,5-tetrahydropyridine-2,6-dicarboxylate N-succinyltransferase (273 aa).

Residues arginine 104 and aspartate 141 each contribute to the substrate site.

This sequence belongs to the transferase hexapeptide repeat family. Homotrimer.

The protein resides in the cytoplasm. The enzyme catalyses (S)-2,3,4,5-tetrahydrodipicolinate + succinyl-CoA + H2O = (S)-2-succinylamino-6-oxoheptanedioate + CoA. Its pathway is amino-acid biosynthesis; L-lysine biosynthesis via DAP pathway; LL-2,6-diaminopimelate from (S)-tetrahydrodipicolinate (succinylase route): step 1/3. The polypeptide is 2,3,4,5-tetrahydropyridine-2,6-dicarboxylate N-succinyltransferase (Psychrobacter sp. (strain PRwf-1)).